Reading from the N-terminus, the 274-residue chain is Large ribosomal subunit protein uL2 (274 aa).

Disordered regions lie at residues 35–60 (EPQH…GHKH) and 224–274 (VMNP…RRKK). The span at 50-60 (TTRHKGGGHKH) shows a compositional bias: basic residues. Positions 229–246 (DHPHGGGEGKTGEGRHAV) are enriched in basic and acidic residues.

It belongs to the universal ribosomal protein uL2 family. Part of the 50S ribosomal subunit. Forms a bridge to the 30S subunit in the 70S ribosome.

Its function is as follows. One of the primary rRNA binding proteins. Required for association of the 30S and 50S subunits to form the 70S ribosome, for tRNA binding and peptide bond formation. It has been suggested to have peptidyltransferase activity; this is somewhat controversial. Makes several contacts with the 16S rRNA in the 70S ribosome. This chain is Large ribosomal subunit protein uL2, found in Delftia acidovorans (strain DSM 14801 / SPH-1).